Reading from the N-terminus, the 204-residue chain is UPF0637 protein SAS1041 (204 aa).

Belongs to the UPF0637 family.

This Staphylococcus aureus (strain MSSA476) protein is UPF0637 protein SAS1041.